The chain runs to 654 residues: Probable potassium transport system protein Kup (654 aa).

The next 13 membrane-spanning stretches (helical) occupy residues 17 to 37, 40 to 60, 71 to 91, 99 to 119, 137 to 157, 164 to 184, 202 to 222, 240 to 260, 281 to 301, 338 to 358, 369 to 389, 394 to 414, and 423 to 443; these read GILVTLGIIYGDIGTSPLYVM, IIGLHTIKPEVVLGGISAIFW, VLITLSADNHGEGGIFALYAL, WLIIPAIIGGSALLADGIITP, INTVPIVIAILVVLFTIQQFG, FFAPMMMIWFAMLAILGILQI, LLSIHPDGFYVLGFVFLCTTG, ISWIFVKIALLLNYFGQGAYL, LVMPEWFQPFGIVISTMAAVI, IYIPSINWLLLAGCIGIVLHF, GLAIVLCMIMTTILLTYFMIL, WFIIAPLILLYLVIEFSFLIA, and GYVTLIIASALTFIMSIWYTA.

The protein belongs to the HAK/KUP transporter (TC 2.A.72) family.

The protein localises to the cell inner membrane. The catalysed reaction is K(+)(in) + H(+)(in) = K(+)(out) + H(+)(out). Transport of potassium into the cell. Likely operates as a K(+):H(+) symporter. The polypeptide is Probable potassium transport system protein Kup (Flavobacterium psychrophilum (strain ATCC 49511 / DSM 21280 / CIP 103535 / JIP02/86)).